Here is a 227-residue protein sequence, read N- to C-terminus: uncharacterized protein (227 aa).

An N-terminal signal peptide occupies residues 1–22; the sequence is MDSVMRKSLFLLLPLVVTNAHA.

This is an uncharacterized protein from Salmonella typhi.